Here is a 355-residue protein sequence, read N- to C-terminus: (R,S)-reticuline 7-O-methyltransferase (355 aa).

S-adenosyl-L-methionine is bound by residues 197-200, aspartate 221, 221-222, 241-242, and lysine 255; these read VGGG, DL, and DM. Histidine 259 acts as the Proton acceptor in catalysis.

The protein belongs to the class I-like SAM-binding methyltransferase superfamily. Cation-independent O-methyltransferase family. Homodimer. In terms of tissue distribution, expressed in capsules, buds and stems, and at lower levels in leaves. Localized to parenchyma cells within the vascular bundle, but only to those cells distal to laticifers. In roots, found in the pericycle within the stele.

It catalyses the reaction (S)-reticuline + S-adenosyl-L-methionine = (S)-laudanine + S-adenosyl-L-homocysteine + H(+). The enzyme catalyses (R)-reticuline + S-adenosyl-L-methionine = (R)-laudanine + S-adenosyl-L-homocysteine + H(+). In terms of biological role, catalyzes the transfer of a methyl group to reticuline to form laudanine. Methylates the simple catechols guaiacol and isovanillic acid as well as the tetrahydrobenzylisoquinolines (R)-reticuline, (S)-reticuline, (R,S)-orientaline, (R)-protosinomenine and (R,S)-isoorientaline. Involved in the production of laudanine. This is (R,S)-reticuline 7-O-methyltransferase from Papaver somniferum (Opium poppy).